The primary structure comprises 341 residues: Retinol dehydrogenase 10-B (341 aa).

A helical; Signal-anchor transmembrane segment spans residues 3–23; that stretch reads IVLEFFLVTFRVLWAFVLAAA. 40–64 is an NADP(+) binding site; the sequence is LITGAGSGLGRLFALEFARRRAQLV. Serine 197 is a binding site for substrate. The Proton acceptor role is filled by tyrosine 210.

The protein belongs to the short-chain dehydrogenases/reductases (SDR) family.

The protein localises to the microsome membrane. It localises to the endoplasmic reticulum membrane. It carries out the reaction all-trans-retinol + NADP(+) = all-trans-retinal + NADPH + H(+). Its pathway is cofactor metabolism; retinol metabolism. In terms of biological role, retinol dehydrogenase with a clear preference for NADP. Converts all-trans-retinol to all-trans-retinal. Has no detectable activity towards 11-cis-retinol, 9-cis-retinol and 13-cis-retinol. In Xenopus laevis (African clawed frog), this protein is Retinol dehydrogenase 10-B (rdh10-b).